We begin with the raw amino-acid sequence, 113 residues long: Large ribosomal subunit protein uL22 (113 aa).

It belongs to the universal ribosomal protein uL22 family. In terms of assembly, part of the 50S ribosomal subunit.

Its function is as follows. This protein binds specifically to 23S rRNA; its binding is stimulated by other ribosomal proteins, e.g. L4, L17, and L20. It is important during the early stages of 50S assembly. It makes multiple contacts with different domains of the 23S rRNA in the assembled 50S subunit and ribosome. Functionally, the globular domain of the protein is located near the polypeptide exit tunnel on the outside of the subunit, while an extended beta-hairpin is found that lines the wall of the exit tunnel in the center of the 70S ribosome. The sequence is that of Large ribosomal subunit protein uL22 from Desulforamulus reducens (strain ATCC BAA-1160 / DSM 100696 / MI-1) (Desulfotomaculum reducens).